The following is a 319-amino-acid chain: Acetyl-coenzyme A carboxylase carboxyl transferase subunit beta (319 aa).

Positions 24–293 (LWIKCPDTGQ…MIEQEPEPSA (270 aa)) constitute a CoA carboxyltransferase N-terminal domain. The interval 282–319 (PEMIEQEPEPSAPVPPDEPDEPAATQEAPPAAPAAPPA) is disordered.

Belongs to the AccD/PCCB family. As to quaternary structure, acetyl-CoA carboxylase is a heterohexamer composed of biotin carboxyl carrier protein (AccB), biotin carboxylase (AccC) and two subunits each of ACCase subunit alpha (AccA) and ACCase subunit beta (AccD).

It is found in the cytoplasm. The enzyme catalyses N(6)-carboxybiotinyl-L-lysyl-[protein] + acetyl-CoA = N(6)-biotinyl-L-lysyl-[protein] + malonyl-CoA. Its pathway is lipid metabolism; malonyl-CoA biosynthesis; malonyl-CoA from acetyl-CoA: step 1/1. Component of the acetyl coenzyme A carboxylase (ACC) complex. Biotin carboxylase (BC) catalyzes the carboxylation of biotin on its carrier protein (BCCP) and then the CO(2) group is transferred by the transcarboxylase to acetyl-CoA to form malonyl-CoA. The sequence is that of Acetyl-coenzyme A carboxylase carboxyl transferase subunit beta from Nitrobacter winogradskyi (strain ATCC 25391 / DSM 10237 / CIP 104748 / NCIMB 11846 / Nb-255).